We begin with the raw amino-acid sequence, 226 residues long: V-type proton ATPase subunit E 1 (226 aa).

Ala2 carries the N-acetylalanine modification. At Tyr56 the chain carries Phosphotyrosine.

The protein belongs to the V-ATPase E subunit family. In terms of assembly, V-ATPase is a heteromultimeric enzyme made up of two complexes: the ATP-hydrolytic V1 complex and the proton translocation V0 complex. The V1 complex consists of three catalytic AB heterodimers that form a heterohexamer, three peripheral stalks each consisting of EG heterodimers, one central rotor including subunits D and F, and the regulatory subunits C and H. The proton translocation complex V0 consists of the proton transport subunit a, a ring of proteolipid subunits c9c'', rotary subunit d, subunits e and f, and the accessory subunits ATP6AP1/Ac45 and ATP6AP2/PRR. Interacts with RABL2/RABL2A; binds preferentially to GTP-bound RABL2. Interacts with ALDOC. Interacts with RAB11B. As to expression, kidney; localizes to early distal nephron, encompassing thick ascending limbs and distal convoluted tubules (at protein level). Ubiquitous. High expression in the skin.

Its subcellular location is the apical cell membrane. The protein resides in the cytoplasmic vesicle. It is found in the secretory vesicle. The protein localises to the synaptic vesicle membrane. It localises to the clathrin-coated vesicle membrane. Subunit of the V1 complex of vacuolar(H+)-ATPase (V-ATPase), a multisubunit enzyme composed of a peripheral complex (V1) that hydrolyzes ATP and a membrane integral complex (V0) that translocates protons. V-ATPase is responsible for acidifying and maintaining the pH of intracellular compartments and in some cell types, is targeted to the plasma membrane, where it is responsible for acidifying the extracellular environment. This Homo sapiens (Human) protein is V-type proton ATPase subunit E 1 (ATP6V1E1).